The primary structure comprises 37 residues: Large ribosomal subunit protein bL36 (37 aa).

Belongs to the bacterial ribosomal protein bL36 family.

The chain is Large ribosomal subunit protein bL36 from Synechococcus sp. (strain RCC307).